The primary structure comprises 394 residues: Flap endonuclease 1 (394 aa).

The tract at residues 1-103 (MGIKSLYQII…GELAKRTMRK (103 aa)) is N-domain. Asp-34 contacts Mg(2+). Position 69 (Arg-69) interacts with DNA. Asp-85 is a Mg(2+) binding site. Residues 102–123 (RKAEAQEAAEEAKETGTAEDVE) are disordered. Positions 121–252 (DVEKFSRRTV…NTALKMIRDH (132 aa)) are I-domain. Glu-157, Glu-159, Asp-178, and Asp-180 together coordinate Mg(2+). Glu-157 contacts DNA. The DNA site is built by Gly-230 and Asp-232. Asp-232 contacts Mg(2+). The segment at 340 to 348 (QQSRLEGFF) is interaction with PCNA. A disordered region spans residues 349 to 394 (KPVAKTEQQKATAKRKAEEKAELAKKKKKEDAKAKRAMGAKPRGAR). Positions 363-382 (RKAEEKAELAKKKKKEDAKA) are enriched in basic and acidic residues. The segment covering 383–394 (KRAMGAKPRGAR) has biased composition (basic residues).

The protein belongs to the XPG/RAD2 endonuclease family. FEN1 subfamily. As to quaternary structure, interacts with PCNA. Three molecules of FEN1 bind to one PCNA trimer with each molecule binding to one PCNA monomer. PCNA stimulates the nuclease activity without altering cleavage specificity. Mg(2+) is required as a cofactor. Post-translationally, phosphorylated. Phosphorylation upon DNA damage induces relocalization to the nuclear plasma.

It is found in the nucleus. It localises to the nucleolus. Its subcellular location is the nucleoplasm. The protein resides in the mitochondrion. In terms of biological role, structure-specific nuclease with 5'-flap endonuclease and 5'-3' exonuclease activities involved in DNA replication and repair. During DNA replication, cleaves the 5'-overhanging flap structure that is generated by displacement synthesis when DNA polymerase encounters the 5'-end of a downstream Okazaki fragment. It enters the flap from the 5'-end and then tracks to cleave the flap base, leaving a nick for ligation. Also involved in the long patch base excision repair (LP-BER) pathway, by cleaving within the apurinic/apyrimidinic (AP) site-terminated flap. Acts as a genome stabilization factor that prevents flaps from equilibrating into structures that lead to duplications and deletions. Also possesses 5'-3' exonuclease activity on nicked or gapped double-stranded DNA, and exhibits RNase H activity. Also involved in replication and repair of rDNA and in repairing mitochondrial DNA. The sequence is that of Flap endonuclease 1 from Arthroderma otae (strain ATCC MYA-4605 / CBS 113480) (Microsporum canis).